The sequence spans 558 residues: uncharacterized protein (558 aa).

Positions 338–354 (STSTSTSTSTSSSNDLN) are enriched in low complexity. The tract at residues 338-380 (STSTSTSTSTSSSNDLNLDSDSDDSDSDDSDSDSDSDSDSEID) is disordered. The segment covering 355 to 380 (LDSDSDDSDSDDSDSDSDSDSDSEID) has biased composition (acidic residues).

It localises to the plastid. This is an uncharacterized protein from Euglena longa (Euglenophycean alga).